Consider the following 821-residue polypeptide: Probable E3 ubiquitin-protein ligase hulA (821 aa).

In terms of domain architecture, C2 spans 1 to 112; that stretch reads MGSNLPAQPN…QMGGDEMLTR (112 aa). Disordered regions lie at residues 140-240 and 255-359; these read PNQA…WERR and RTTT…YFVD. Polar residues-rich tracts occupy residues 151–173, 181–201, 217–228, and 255–272; these read AQSS…SVSP, AASN…PTST, QGSRTNLSSFED, and RTTT…QTQR. The region spanning 231 to 264 is the WW 1 domain; sequence GRLPAGWERREDNLGRTYYVDHNTRTTTWTRPSS. Residues 281 to 296 are compositionally biased toward basic and acidic residues; that stretch reads LERRAHQSRMLPEDRT. Positions 297-306 are enriched in polar residues; that stretch reads GANSPNLQES. The segment covering 311–339 has biased composition (low complexity); it reads PQQAHTPPAGGSASAVSMMATGATTAGTG. WW domains follow at residues 339-372 and 399-432; these read GELP…DPRR and GPLP…DPRL. The HECT domain maps to 488–821; that stretch reads SASDLKKRLM…VEETLGFGQE (334 aa). Cysteine 789 (glycyl thioester intermediate) is an active-site residue.

The protein belongs to the RSP5/NEDD4 family. Interacts with creD.

It localises to the cytoplasm. It catalyses the reaction S-ubiquitinyl-[E2 ubiquitin-conjugating enzyme]-L-cysteine + [acceptor protein]-L-lysine = [E2 ubiquitin-conjugating enzyme]-L-cysteine + N(6)-ubiquitinyl-[acceptor protein]-L-lysine.. Its pathway is protein modification; protein ubiquitination. Its function is as follows. E3 ubiquitin-protein ligase which accepts ubiquitin from an E2 ubiquitin-conjugating enzyme in the form of a thioester and then directly transfers the ubiquitin to targeted substrates. Probably involved in the regulatory network controlling carbon source utilization. In Aspergillus niger (strain ATCC MYA-4892 / CBS 513.88 / FGSC A1513), this protein is Probable E3 ubiquitin-protein ligase hulA (hulA).